Consider the following 690-residue polypeptide: Polyribonucleotide nucleotidyltransferase (690 aa).

Aspartate 482 and aspartate 488 together coordinate Mg(2+). The KH domain maps to 549-608 (PRIITIQINPDRIRDVIGPGGKVIRALTEETGATIDIQDNGTVTIASVDGEAGAAAKRRI). The S1 motif domain occupies 618–686 (DTIYDGKVAK…RQGKIKLSMK (69 aa)).

It belongs to the polyribonucleotide nucleotidyltransferase family. As to quaternary structure, component of the RNA degradosome, which is a multiprotein complex involved in RNA processing and mRNA degradation. Mg(2+) is required as a cofactor.

Its subcellular location is the cytoplasm. The catalysed reaction is RNA(n+1) + phosphate = RNA(n) + a ribonucleoside 5'-diphosphate. In terms of biological role, involved in mRNA degradation. Catalyzes the phosphorolysis of single-stranded polyribonucleotides processively in the 3'- to 5'-direction. In Acidithiobacillus ferrooxidans (strain ATCC 23270 / DSM 14882 / CIP 104768 / NCIMB 8455) (Ferrobacillus ferrooxidans (strain ATCC 23270)), this protein is Polyribonucleotide nucleotidyltransferase.